The following is a 326-amino-acid chain: Vitamin B12 import system permease protein BtuC (326 aa).

9 consecutive transmembrane segments (helical) span residues 19–39 (LSVL…LWIL), 61–81 (LAVL…QALF), 88–108 (PGLL…VLLG), 112–132 (LPNW…TLIL), 146–166 (LLAG…AIYF), 184–204 (GGVD…LLWI), 240–260 (GWMV…GLVI), 274–294 (VLLP…DIVA), and 302–322 (ELPI…WLLL).

The protein belongs to the binding-protein-dependent transport system permease family. FecCD subfamily. The complex is composed of two ATP-binding proteins (BtuD), two transmembrane proteins (BtuC) and a solute-binding protein (BtuF).

It is found in the cell inner membrane. In terms of biological role, part of the ABC transporter complex BtuCDF involved in vitamin B12 import. Involved in the translocation of the substrate across the membrane. The protein is Vitamin B12 import system permease protein BtuC of Escherichia coli O6:K15:H31 (strain 536 / UPEC).